The primary structure comprises 110 residues: Lichenan-specific phosphotransferase enzyme IIA component (110 aa).

The PTS EIIA type-3 domain occupies 3–101 (EEMEQIIFQI…AAEIIELYEK (99 aa)). His-77 (tele-phosphohistidine intermediate; by HPr) is an active-site residue.

The protein resides in the cytoplasm. In terms of biological role, the phosphoenolpyruvate-dependent sugar phosphotransferase system (PTS), a major carbohydrate active -transport system, catalyzes the phosphorylation of incoming sugar substrates concomitant with their translocation across the cell membrane. This system is involved in lichenan transport. The polypeptide is Lichenan-specific phosphotransferase enzyme IIA component (licA) (Bacillus subtilis (strain 168)).